The following is a 622-amino-acid chain: Phosphomethylpyrimidine synthase (622 aa).

Residues asparagine 226, methionine 255, tyrosine 284, histidine 320, 340–342 (SRG), 381–384 (DGLR), and glutamate 420 contribute to the substrate site. Zn(2+) is bound at residue histidine 424. A substrate-binding site is contributed by tyrosine 447. Histidine 488 is a binding site for Zn(2+). 3 residues coordinate [4Fe-4S] cluster: cysteine 568, cysteine 571, and cysteine 576.

It belongs to the ThiC family. In terms of assembly, homodimer. [4Fe-4S] cluster is required as a cofactor.

The enzyme catalyses 5-amino-1-(5-phospho-beta-D-ribosyl)imidazole + S-adenosyl-L-methionine = 4-amino-2-methyl-5-(phosphooxymethyl)pyrimidine + CO + 5'-deoxyadenosine + formate + L-methionine + 3 H(+). Its pathway is cofactor biosynthesis; thiamine diphosphate biosynthesis. Functionally, catalyzes the synthesis of the hydroxymethylpyrimidine phosphate (HMP-P) moiety of thiamine from aminoimidazole ribotide (AIR) in a radical S-adenosyl-L-methionine (SAM)-dependent reaction. The sequence is that of Phosphomethylpyrimidine synthase from Ruthia magnifica subsp. Calyptogena magnifica.